The sequence spans 188 residues: Hypoxanthine/guanine phosphoribosyltransferase (188 aa).

Belongs to the purine/pyrimidine phosphoribosyltransferase family. Archaeal HPRT subfamily. Homodimer.

Its subcellular location is the cytoplasm. The enzyme catalyses IMP + diphosphate = hypoxanthine + 5-phospho-alpha-D-ribose 1-diphosphate. It carries out the reaction GMP + diphosphate = guanine + 5-phospho-alpha-D-ribose 1-diphosphate. It functions in the pathway purine metabolism; IMP biosynthesis via salvage pathway; IMP from hypoxanthine: step 1/1. In terms of biological role, catalyzes a salvage reaction resulting in the formation of IMP that is energically less costly than de novo synthesis. This chain is Hypoxanthine/guanine phosphoribosyltransferase, found in Methanobrevibacter ruminantium (strain ATCC 35063 / DSM 1093 / JCM 13430 / OCM 146 / M1) (Methanobacterium ruminantium).